The chain runs to 359 residues: Phosphate acyltransferase (359 aa).

Belongs to the PlsX family. Homodimer. Probably interacts with PlsY.

It localises to the cytoplasm. It carries out the reaction a fatty acyl-[ACP] + phosphate = an acyl phosphate + holo-[ACP]. It participates in lipid metabolism; phospholipid metabolism. Functionally, catalyzes the reversible formation of acyl-phosphate (acyl-PO(4)) from acyl-[acyl-carrier-protein] (acyl-ACP). This enzyme utilizes acyl-ACP as fatty acyl donor, but not acyl-CoA. The protein is Phosphate acyltransferase of Citrobacter koseri (strain ATCC BAA-895 / CDC 4225-83 / SGSC4696).